We begin with the raw amino-acid sequence, 596 residues long: Aspartate--tRNA(Asp/Asn) ligase (596 aa).

Glu-169 contacts L-aspartate. The interval 193-196 is aspartate; it reads QLFK. Arg-215 lines the L-aspartate pocket. Residues 215–217 and Gln-224 each bind ATP; that span reads RDE. His-447 is a binding site for L-aspartate. Glu-481 contributes to the ATP binding site. Arg-488 contributes to the L-aspartate binding site. ATP is bound at residue 533-536; that stretch reads GWDR. The tract at residues 559–596 is disordered; the sequence is GYDPLTQAPAPITAQQRKEAGVDFKPEAKKADPGATKA. Residues 574–590 show a composition bias toward basic and acidic residues; it reads QRKEAGVDFKPEAKKAD.

This sequence belongs to the class-II aminoacyl-tRNA synthetase family. Type 1 subfamily. In terms of assembly, homodimer.

The protein localises to the cytoplasm. The catalysed reaction is tRNA(Asx) + L-aspartate + ATP = L-aspartyl-tRNA(Asx) + AMP + diphosphate. In terms of biological role, aspartyl-tRNA synthetase with relaxed tRNA specificity since it is able to aspartylate not only its cognate tRNA(Asp) but also tRNA(Asn). Reaction proceeds in two steps: L-aspartate is first activated by ATP to form Asp-AMP and then transferred to the acceptor end of tRNA(Asp/Asn). The sequence is that of Aspartate--tRNA(Asp/Asn) ligase from Arthrobacter sp. (strain FB24).